The following is a 477-amino-acid chain: UDP-N-acetylmuramate--L-alanine ligase (477 aa).

Residue 122 to 128 participates in ATP binding; it reads GTHGKTT.

It belongs to the MurCDEF family.

It localises to the cytoplasm. It catalyses the reaction UDP-N-acetyl-alpha-D-muramate + L-alanine + ATP = UDP-N-acetyl-alpha-D-muramoyl-L-alanine + ADP + phosphate + H(+). It functions in the pathway cell wall biogenesis; peptidoglycan biosynthesis. Cell wall formation. This chain is UDP-N-acetylmuramate--L-alanine ligase, found in Xanthomonas euvesicatoria pv. vesicatoria (strain 85-10) (Xanthomonas campestris pv. vesicatoria).